The chain runs to 279 residues: MEKNCGSGQSKLKALRMHIYFEVDFQEQAQHYQAVLYSRGVTVDLQPIEKLNARFLRLNPDLALCVDENGLWLSANGMKMQPDWKAEIPRLKRATLKSEMIARACQLGEKPVLVDATAGLGHDSLLMAYLGAQIQLVERHPILFTLLEDSKAQAQHDPFLSQFMDRIQLIFADSASYLQQLDQEEKTVDVVYLDPMFPQRDQNQQAIKKQAQVKKQMQLLHLLLPEDGEMDLGDHLLELAKKVAKRVIVKRPRHAIFLANQEPAHQWQGDACRFDAYFQ.

S-adenosyl-L-methionine contacts are provided by residues 138–139 (ER) and Asp194.

It belongs to the methyltransferase superfamily. RsmJ family.

The protein localises to the cytoplasm. The enzyme catalyses guanosine(1516) in 16S rRNA + S-adenosyl-L-methionine = N(2)-methylguanosine(1516) in 16S rRNA + S-adenosyl-L-homocysteine + H(+). In terms of biological role, specifically methylates the guanosine in position 1516 of 16S rRNA. The chain is Ribosomal RNA small subunit methyltransferase J from Acinetobacter baumannii (strain ATCC 17978 / DSM 105126 / CIP 53.77 / LMG 1025 / NCDC KC755 / 5377).